Here is a 1277-residue protein sequence, read N- to C-terminus: DNA repair protein RAD5B (1277 aa).

The interval 271–293 is disordered; it reads KLEQENDDLFSSGDSDGTSAKRR. In terms of domain architecture, Helicase ATP-binding spans 674–871; it reads PTATQMARGG…YSLLCFLHVE (198 aa). Residue 687-694 participates in ATP binding; it reads DAMGLGKT. Positions 822 to 825 match the DEAH box motif; the sequence is DEAH. Residues 1040 to 1080 form an RING-type zinc finger; the sequence is CPICLESADDPVLTPCAHRMCRECLLTSWRSPSCGLCPICR. Positions 1113 to 1277 constitute a Helicase C-terminal domain; sequence ELLKCLEKIK…RLEELKMLFR (165 aa).

The protein belongs to the SNF2/RAD54 helicase family. RAD16 subfamily.

It is found in the nucleus. Possesses intrinsic ATP-dependent nucleosome-remodeling activity. This activity may be required for DNA repair. Does not seem to be required for DNA repair and regulation of homologous recombination (HR). This chain is DNA repair protein RAD5B, found in Arabidopsis thaliana (Mouse-ear cress).